Reading from the N-terminus, the 426-residue chain is Fatty alcohol:caffeoyl-CoA acyltransferase (426 aa).

Catalysis depends on proton acceptor residues His-162 and Asp-374.

The protein belongs to the plant acyltransferase family. Expressed in the outermost circumference of mature roots, the endodermis of young roots and in the seed coat of developing seeds. Expressed in outer integument layer 1 of the seed coat.

Functionally, involved in the synthesis of alkyl hydroxycinnamates in root waxes. Functions as a fatty alcohol:hydroxy cinnamoyl-CoA acyltransferase with apparent preference for caffeoyl-CoA. In Arabidopsis thaliana (Mouse-ear cress), this protein is Fatty alcohol:caffeoyl-CoA acyltransferase.